A 355-amino-acid polypeptide reads, in one-letter code: 3-dehydroquinate synthase (355 aa).

Residues 105-109, 129-130, Lys-142, Lys-151, and 169-172 contribute to the NAD(+) site; these read GVVGD, TS, and TLKT. Positions 184, 246, and 263 each coordinate Zn(2+).

It belongs to the sugar phosphate cyclases superfamily. Dehydroquinate synthase family. NAD(+) is required as a cofactor. The cofactor is Co(2+). Requires Zn(2+) as cofactor.

The protein localises to the cytoplasm. It carries out the reaction 7-phospho-2-dehydro-3-deoxy-D-arabino-heptonate = 3-dehydroquinate + phosphate. Its pathway is metabolic intermediate biosynthesis; chorismate biosynthesis; chorismate from D-erythrose 4-phosphate and phosphoenolpyruvate: step 2/7. Catalyzes the conversion of 3-deoxy-D-arabino-heptulosonate 7-phosphate (DAHP) to dehydroquinate (DHQ). The protein is 3-dehydroquinate synthase of Streptococcus agalactiae serotype III (strain NEM316).